The following is a 264-amino-acid chain: Phosphonates import ATP-binding protein PhnC (264 aa).

One can recognise an ABC transporter domain in the interval 8–255 (LQAENLRMTF…KLIEIYGPEF (248 aa)). 40-47 (GPSGSGKS) serves as a coordination point for ATP.

It belongs to the ABC transporter superfamily. Phosphonates importer (TC 3.A.1.9.1) family. As to quaternary structure, the complex is composed of two ATP-binding proteins (PhnC), two transmembrane proteins (PhnE) and a solute-binding protein (PhnD).

It is found in the cell inner membrane. It catalyses the reaction phosphonate(out) + ATP + H2O = phosphonate(in) + ADP + phosphate + H(+). Part of the ABC transporter complex PhnCDE involved in phosphonates import. Responsible for energy coupling to the transport system. The protein is Phosphonates import ATP-binding protein PhnC of Maricaulis maris (strain MCS10) (Caulobacter maris).